A 287-amino-acid chain; its full sequence is Phosphatidylserine decarboxylase proenzyme (287 aa).

Active-site charge relay system; for autoendoproteolytic cleavage activity residues include D89, H146, and S252. The active-site Schiff-base intermediate with substrate; via pyruvic acid; for decarboxylase activity is the S252. Pyruvic acid (Ser); by autocatalysis is present on S252.

This sequence belongs to the phosphatidylserine decarboxylase family. PSD-B subfamily. Prokaryotic type I sub-subfamily. As to quaternary structure, heterodimer of a large membrane-associated beta subunit and a small pyruvoyl-containing alpha subunit. Pyruvate is required as a cofactor. Post-translationally, is synthesized initially as an inactive proenzyme. Formation of the active enzyme involves a self-maturation process in which the active site pyruvoyl group is generated from an internal serine residue via an autocatalytic post-translational modification. Two non-identical subunits are generated from the proenzyme in this reaction, and the pyruvate is formed at the N-terminus of the alpha chain, which is derived from the carboxyl end of the proenzyme. The autoendoproteolytic cleavage occurs by a canonical serine protease mechanism, in which the side chain hydroxyl group of the serine supplies its oxygen atom to form the C-terminus of the beta chain, while the remainder of the serine residue undergoes an oxidative deamination to produce ammonia and the pyruvoyl prosthetic group on the alpha chain. During this reaction, the Ser that is part of the protease active site of the proenzyme becomes the pyruvoyl prosthetic group, which constitutes an essential element of the active site of the mature decarboxylase.

It localises to the cell membrane. The catalysed reaction is a 1,2-diacyl-sn-glycero-3-phospho-L-serine + H(+) = a 1,2-diacyl-sn-glycero-3-phosphoethanolamine + CO2. It functions in the pathway phospholipid metabolism; phosphatidylethanolamine biosynthesis; phosphatidylethanolamine from CDP-diacylglycerol: step 2/2. In terms of biological role, catalyzes the formation of phosphatidylethanolamine (PtdEtn) from phosphatidylserine (PtdSer). This Shewanella amazonensis (strain ATCC BAA-1098 / SB2B) protein is Phosphatidylserine decarboxylase proenzyme.